Reading from the N-terminus, the 633-residue chain is UvrABC system protein C (633 aa).

The GIY-YIG domain maps to Thr21–Val100. Residues Gln214 to Tyr249 enclose the UVR domain.

The protein belongs to the UvrC family. In terms of assembly, interacts with UvrB in an incision complex.

It is found in the cytoplasm. Functionally, the UvrABC repair system catalyzes the recognition and processing of DNA lesions. UvrC both incises the 5' and 3' sides of the lesion. The N-terminal half is responsible for the 3' incision and the C-terminal half is responsible for the 5' incision. This Salinibacter ruber (strain DSM 13855 / M31) protein is UvrABC system protein C.